The primary structure comprises 217 residues: Leucyl/phenylalanyl-tRNA--protein transferase (217 aa).

Belongs to the L/F-transferase family.

The protein localises to the cytoplasm. It carries out the reaction N-terminal L-lysyl-[protein] + L-leucyl-tRNA(Leu) = N-terminal L-leucyl-L-lysyl-[protein] + tRNA(Leu) + H(+). The catalysed reaction is N-terminal L-arginyl-[protein] + L-leucyl-tRNA(Leu) = N-terminal L-leucyl-L-arginyl-[protein] + tRNA(Leu) + H(+). It catalyses the reaction L-phenylalanyl-tRNA(Phe) + an N-terminal L-alpha-aminoacyl-[protein] = an N-terminal L-phenylalanyl-L-alpha-aminoacyl-[protein] + tRNA(Phe). Functionally, functions in the N-end rule pathway of protein degradation where it conjugates Leu, Phe and, less efficiently, Met from aminoacyl-tRNAs to the N-termini of proteins containing an N-terminal arginine or lysine. This chain is Leucyl/phenylalanyl-tRNA--protein transferase, found in Caulobacter vibrioides (strain ATCC 19089 / CIP 103742 / CB 15) (Caulobacter crescentus).